Reading from the N-terminus, the 326-residue chain is Mitochondrial substrate carrier family protein R (326 aa).

Solcar repeat units lie at residues 9 to 95 (TSPM…LKNN), 101 to 214 (KSSV…FKRI), and 226 to 318 (VIGI…LCDY). The next 6 helical transmembrane spans lie at 12-32 (MVTL…IAPL), 64-84 (LAGL…YSAI), 104-124 (VQIF…TYPL), 185-205 (GIWR…GVGY), 226-246 (VIGI…QTAA), and 290-310 (LFKG…VAFL).

It belongs to the mitochondrial carrier (TC 2.A.29) family.

The protein localises to the mitochondrion inner membrane. Functionally, mitochondrial solute carriers shuttle metabolites, nucleotides, and cofactors through the mitochondrial inner membrane. May be involved in the accumulation of coenzyme A in the mitochondrial matrix. This Dictyostelium discoideum (Social amoeba) protein is Mitochondrial substrate carrier family protein R (mcfR).